Reading from the N-terminus, the 207-residue chain is Large ribosomal subunit protein uL18 (207 aa).

The protein belongs to the universal ribosomal protein uL18 family. In terms of assembly, part of the 50S ribosomal subunit. Contacts the 5S and 23S rRNAs.

Its function is as follows. This is one of the proteins that bind and probably mediate the attachment of the 5S RNA into the large ribosomal subunit, where it forms part of the central protuberance. The chain is Large ribosomal subunit protein uL18 from Caldivirga maquilingensis (strain ATCC 700844 / DSM 13496 / JCM 10307 / IC-167).